Here is a 283-residue protein sequence, read N- to C-terminus: MMTHWPSPAKLNLFLYITGQRADGYHTLQTLFQFLDYGDTLHIEPRRDGEIHLLTPVTGVENEDNLIVRAARLLMKVASESGRLPAGSGADISIEKRLPMGGGLGGGSSNAATVLVALNHLWQCGLSIDELATLGLTLGADVPVFVRGHAAFAEGVGEILTPVNPPEKWYLVAHPGVSIPTPVIFKDPQLPRNTPKRSIDTLLKCEFSNDCEVIARKRFREVDAALSWLLEYAPSRLTGTGACVFAEFDTESCARQVLEQAPEWLNAFVAKGVNLSPLHRELL.

The active site involves Lys-10. Position 99–109 (99–109 (PMGGGLGGGSS)) interacts with ATP. Asp-141 is a catalytic residue.

It belongs to the GHMP kinase family. IspE subfamily. Homodimer.

It catalyses the reaction 4-CDP-2-C-methyl-D-erythritol + ATP = 4-CDP-2-C-methyl-D-erythritol 2-phosphate + ADP + H(+). It functions in the pathway isoprenoid biosynthesis; isopentenyl diphosphate biosynthesis via DXP pathway; isopentenyl diphosphate from 1-deoxy-D-xylulose 5-phosphate: step 3/6. Functionally, catalyzes the phosphorylation of the position 2 hydroxy group of 4-diphosphocytidyl-2C-methyl-D-erythritol. In Salmonella enteritidis PT4 (strain P125109), this protein is 4-diphosphocytidyl-2-C-methyl-D-erythritol kinase.